The chain runs to 425 residues: Dual-specificity RNA methyltransferase RlmN (425 aa).

Glutamate 136 (proton acceptor) is an active-site residue. In terms of domain architecture, Radical SAM core spans 142–389; it reads GDDRGTLCVS…VRTPRGRDIL (248 aa). A disulfide bridge connects residues cysteine 149 and cysteine 392. [4Fe-4S] cluster-binding residues include cysteine 156, cysteine 160, and cysteine 163. Residues 218 to 219, serine 250, 272 to 274, and asparagine 349 contribute to the S-adenosyl-L-methionine site; these read GE and SLH. Cysteine 392 functions as the S-methylcysteine intermediate in the catalytic mechanism.

Belongs to the radical SAM superfamily. RlmN family. [4Fe-4S] cluster serves as cofactor.

It localises to the cytoplasm. It catalyses the reaction adenosine(2503) in 23S rRNA + 2 reduced [2Fe-2S]-[ferredoxin] + 2 S-adenosyl-L-methionine = 2-methyladenosine(2503) in 23S rRNA + 5'-deoxyadenosine + L-methionine + 2 oxidized [2Fe-2S]-[ferredoxin] + S-adenosyl-L-homocysteine. It carries out the reaction adenosine(37) in tRNA + 2 reduced [2Fe-2S]-[ferredoxin] + 2 S-adenosyl-L-methionine = 2-methyladenosine(37) in tRNA + 5'-deoxyadenosine + L-methionine + 2 oxidized [2Fe-2S]-[ferredoxin] + S-adenosyl-L-homocysteine. Functionally, specifically methylates position 2 of adenine 2503 in 23S rRNA and position 2 of adenine 37 in tRNAs. m2A2503 modification seems to play a crucial role in the proofreading step occurring at the peptidyl transferase center and thus would serve to optimize ribosomal fidelity. The polypeptide is Dual-specificity RNA methyltransferase RlmN (Methylorubrum populi (strain ATCC BAA-705 / NCIMB 13946 / BJ001) (Methylobacterium populi)).